The following is a 1438-amino-acid chain: DNA-directed RNA polymerase subunit beta' (1438 aa).

Zn(2+) is bound by residues Cys72, Cys74, Cys87, and Cys90. Mg(2+) contacts are provided by Asp483, Asp485, and Asp487. 4 residues coordinate Zn(2+): Cys831, Cys905, Cys912, and Cys915.

This sequence belongs to the RNA polymerase beta' chain family. The RNAP catalytic core consists of 2 alpha, 1 beta, 1 beta' and 1 omega subunit. When a sigma factor is associated with the core the holoenzyme is formed, which can initiate transcription. Mg(2+) is required as a cofactor. The cofactor is Zn(2+).

It carries out the reaction RNA(n) + a ribonucleoside 5'-triphosphate = RNA(n+1) + diphosphate. Its function is as follows. DNA-dependent RNA polymerase catalyzes the transcription of DNA into RNA using the four ribonucleoside triphosphates as substrates. This chain is DNA-directed RNA polymerase subunit beta', found in Flavobacterium psychrophilum (strain ATCC 49511 / DSM 21280 / CIP 103535 / JIP02/86).